We begin with the raw amino-acid sequence, 426 residues long: Hemojuvelin (426 aa).

The signal sequence occupies residues 1-35; the sequence is MGEPGQSPSPRSSHGSPPTLSTLTLLLLLCGHAHS. Tyr46 is modified (phosphotyrosine). Asn118 carries an N-linked (GlcNAc...) asparagine glycan. A disordered region spans residues 119-142; that stretch reads CSRQGPTAPPPPRGPALPGAGSGL. Intrachain disulfides connect Cys148–Cys230 and Cys167–Cys317. N-linked (GlcNAc...) asparagine glycans are attached at residues Asn213 and Asn372. Asp400 is lipidated: GPI-anchor amidated aspartate. Positions 401–426 are cleaved as a propeptide — removed in mature form; that stretch reads AGVPLSSATLLAPLLSGLFVLWLCIQ.

It belongs to the repulsive guidance molecule (RGM) family. As to quaternary structure, interacts with BMP2 and BMP4. Interacts with BMP6. Interacts with BMPR1B. Interacts with TMPRSS6. Autocatalytically cleaved at low pH; the two chains remain linked via two disulfide bonds. Also proteolytically processed by TMPRSS6, several fragments being released in the extracellular space; regulates HJV activity in BMP signaling and thefore iron homeostasis. As to expression, adult and fetal liver, heart, and skeletal muscle.

It localises to the cell membrane. Functionally, acts as a bone morphogenetic protein (BMP) coreceptor. Through enhancement of BMP signaling regulates hepcidin (HAMP) expression and regulates iron homeostasis. In Homo sapiens (Human), this protein is Hemojuvelin.